Here is a 211-residue protein sequence, read N- to C-terminus: Large ribosomal subunit protein uL4 (211 aa).

The tract at residues 44-94 (RSGNHATKTRSEVRGGGKKPWSQKGTGHARQGSTRAPHWVGGGTVHGPQKR) is disordered.

It belongs to the universal ribosomal protein uL4 family. In terms of assembly, part of the 50S ribosomal subunit.

Functionally, one of the primary rRNA binding proteins, this protein initially binds near the 5'-end of the 23S rRNA. It is important during the early stages of 50S assembly. It makes multiple contacts with different domains of the 23S rRNA in the assembled 50S subunit and ribosome. Forms part of the polypeptide exit tunnel. In Leptospira borgpetersenii serovar Hardjo-bovis (strain JB197), this protein is Large ribosomal subunit protein uL4.